Reading from the N-terminus, the 201-residue chain is Glycerol-3-phosphate acyltransferase (201 aa).

The next 5 membrane-spanning stretches (helical) occupy residues 9 to 29, 60 to 80, 86 to 106, 116 to 136, and 153 to 173; these read LTLI…FGLI, LAAA…LVAS, AAIG…WIGF, LGVL…VWIV, and IVVP…LFAI.

The protein belongs to the PlsY family. Probably interacts with PlsX.

Its subcellular location is the cell inner membrane. It carries out the reaction an acyl phosphate + sn-glycerol 3-phosphate = a 1-acyl-sn-glycero-3-phosphate + phosphate. Its pathway is lipid metabolism; phospholipid metabolism. Catalyzes the transfer of an acyl group from acyl-phosphate (acyl-PO(4)) to glycerol-3-phosphate (G3P) to form lysophosphatidic acid (LPA). This enzyme utilizes acyl-phosphate as fatty acyl donor, but not acyl-CoA or acyl-ACP. The sequence is that of Glycerol-3-phosphate acyltransferase from Brucella anthropi (strain ATCC 49188 / DSM 6882 / CCUG 24695 / JCM 21032 / LMG 3331 / NBRC 15819 / NCTC 12168 / Alc 37) (Ochrobactrum anthropi).